Here is a 287-residue protein sequence, read N- to C-terminus: Polyamine aminopropyltransferase (287 aa).

The PABS domain occupies 5–238 (EIWYETLHAN…GIMTFAWASN (234 aa)). Gln-33 lines the S-methyl-5'-thioadenosine pocket. Spermidine is bound by residues His-64 and Asp-88. Residues Glu-108 and 140-141 (DG) contribute to the S-methyl-5'-thioadenosine site. Asp-158 (proton acceptor) is an active-site residue. A spermidine-binding site is contributed by 158-161 (DCTD). Residue Pro-165 coordinates S-methyl-5'-thioadenosine.

Belongs to the spermidine/spermine synthase family. Homodimer or homotetramer.

It localises to the cytoplasm. It carries out the reaction S-adenosyl 3-(methylsulfanyl)propylamine + putrescine = S-methyl-5'-thioadenosine + spermidine + H(+). Its pathway is amine and polyamine biosynthesis; spermidine biosynthesis; spermidine from putrescine: step 1/1. Functionally, catalyzes the irreversible transfer of a propylamine group from the amino donor S-adenosylmethioninamine (decarboxy-AdoMet) to putrescine (1,4-diaminobutane) to yield spermidine. This is Polyamine aminopropyltransferase from Pectobacterium carotovorum subsp. carotovorum (strain PC1).